The primary structure comprises 432 residues: MAESTVTADSKLTSSDTRRRIWAIVGASSGNLVEWFDFYVYSFCSLYFAHIFFPSGNTTTQLLQTAGVFAAGFLMRPIGGWLFGRIADKHGRKKSMLLSVCMMCFGSLVIACLPGYETIGTWAPALLLLARLFQGLSVGGEYGTSATYMSEVAVEGRKGFYASFQYVTLIGGQLLALLVVVVLQHTMEDAALREWGWRIPFALGAVLAVVALWLRRQLDETSQQETRALKEAGSLKGLWRNRRAFIMVLGFTAAGSLCFYTFTTYMQKYLVNTAGMHANVASGIMTAALFVFMLIQPLIGALSDKIGRRTSMLCFGSLAAIFTVPILSALQNVSSPYAAFGLVMCALLIVSFYTSISGILKAEMFPAQVRALGVGLSYAVANAIFGGSAEYVALSLKSIGMETAFFWYVTLMAVVAFLVSLMLHRKGKGMRL.

The Cytoplasmic segment spans residues 1–32; it reads MAESTVTADSKLTSSDTRRRIWAIVGASSGNL. Residues 33 to 53 traverse the membrane as a helical segment; sequence VEWFDFYVYSFCSLYFAHIFF. Over 54–62 the chain is Periplasmic; that stretch reads PSGNTTTQL. The helical transmembrane segment at 63–83 threads the bilayer; the sequence is LQTAGVFAAGFLMRPIGGWLF. The Cytoplasmic portion of the chain corresponds to 84-95; that stretch reads GRIADKHGRKKS. A helical transmembrane segment spans residues 96–116; sequence MLLSVCMMCFGSLVIACLPGY. Topologically, residues 117–118 are periplasmic; sequence ET. The helical transmembrane segment at 119 to 139 threads the bilayer; the sequence is IGTWAPALLLLARLFQGLSVG. The Cytoplasmic portion of the chain corresponds to 140-162; it reads GEYGTSATYMSEVAVEGRKGFYA. Residues 163–183 form a helical membrane-spanning segment; the sequence is SFQYVTLIGGQLLALLVVVVL. The Periplasmic portion of the chain corresponds to 184 to 193; the sequence is QHTMEDAALR. A helical transmembrane segment spans residues 194–214; it reads EWGWRIPFALGAVLAVVALWL. At 215-243 the chain is on the cytoplasmic side; that stretch reads RRQLDETSQQETRALKEAGSLKGLWRNRR. A helical transmembrane segment spans residues 244–264; sequence AFIMVLGFTAAGSLCFYTFTT. Topologically, residues 265 to 279 are periplasmic; it reads YMQKYLVNTAGMHAN. The chain crosses the membrane as a helical span at residues 280-300; the sequence is VASGIMTAALFVFMLIQPLIG. The Cytoplasmic segment spans residues 301–309; it reads ALSDKIGRR. The chain crosses the membrane as a helical span at residues 310–330; sequence TSMLCFGSLAAIFTVPILSAL. Residues 331-339 are Periplasmic-facing; it reads QNVSSPYAA. The chain crosses the membrane as a helical span at residues 340-360; that stretch reads FGLVMCALLIVSFYTSISGIL. The Cytoplasmic segment spans residues 361–373; it reads KAEMFPAQVRALG. A helical membrane pass occupies residues 374 to 394; it reads VGLSYAVANAIFGGSAEYVAL. Topologically, residues 395–402 are periplasmic; that stretch reads SLKSIGME. Residues 403 to 423 traverse the membrane as a helical segment; it reads TAFFWYVTLMAVVAFLVSLML. The Cytoplasmic segment spans residues 424–432; it reads HRKGKGMRL.

The protein belongs to the major facilitator superfamily. Metabolite:H+ Symporter (MHS) family (TC 2.A.1.6) family.

The protein resides in the cell inner membrane. In terms of biological role, uptake of alpha-ketoglutarate across the boundary membrane with the concomitant import of a cation (symport system). The chain is Alpha-ketoglutarate permease (kgtP) from Escherichia coli (strain K12).